We begin with the raw amino-acid sequence, 288 residues long: Protein RepA (288 aa).

The protein belongs to the initiator RepB protein family.

Functionally, this protein is essential for plasmid replication; it is involved in copy control functions. The chain is Protein RepA (repA) from Escherichia coli.